The primary structure comprises 268 residues: Tryptophan synthase alpha chain (268 aa).

Catalysis depends on proton acceptor residues glutamate 49 and aspartate 60.

Belongs to the TrpA family. Tetramer of two alpha and two beta chains.

The enzyme catalyses (1S,2R)-1-C-(indol-3-yl)glycerol 3-phosphate + L-serine = D-glyceraldehyde 3-phosphate + L-tryptophan + H2O. It functions in the pathway amino-acid biosynthesis; L-tryptophan biosynthesis; L-tryptophan from chorismate: step 5/5. In terms of biological role, the alpha subunit is responsible for the aldol cleavage of indoleglycerol phosphate to indole and glyceraldehyde 3-phosphate. The sequence is that of Tryptophan synthase alpha chain from Escherichia coli O6:K15:H31 (strain 536 / UPEC).